Reading from the N-terminus, the 342-residue chain is S-adenosylmethionine:tRNA ribosyltransferase-isomerase (342 aa).

This sequence belongs to the QueA family. Monomer.

It is found in the cytoplasm. It catalyses the reaction 7-aminomethyl-7-carbaguanosine(34) in tRNA + S-adenosyl-L-methionine = epoxyqueuosine(34) in tRNA + adenine + L-methionine + 2 H(+). It participates in tRNA modification; tRNA-queuosine biosynthesis. Functionally, transfers and isomerizes the ribose moiety from AdoMet to the 7-aminomethyl group of 7-deazaguanine (preQ1-tRNA) to give epoxyqueuosine (oQ-tRNA). In Campylobacter jejuni subsp. jejuni serotype O:2 (strain ATCC 700819 / NCTC 11168), this protein is S-adenosylmethionine:tRNA ribosyltransferase-isomerase.